The chain runs to 315 residues: Putative olfactory receptor 2I1 (315 aa).

At 1-24 the chain is on the extracellular side; it reads MKANYSAEERFLLLGFSDWPSLQP. The chain crosses the membrane as a helical span at residues 25–48; that stretch reads VLFALVLLCYLLTLTGNSALVLLA. Residues 49–56 are Cytoplasmic-facing; that stretch reads VRDPRLHT. A helical transmembrane segment spans residues 57-78; the sequence is PMYYFLCHLALVDAGFTTSVVP. Residues 79–99 are Extracellular-facing; that stretch reads PLLANLRGPALWLPRSHCTAQ. An intrachain disulfide couples C96 to C188. The chain crosses the membrane as a helical span at residues 100 to 119; that stretch reads LCASLALGSAECVLLAVMAL. Topologically, residues 120–138 are cytoplasmic; sequence DRAAAVCRPLRYAGLVSPR. Residues 139–157 form a helical membrane-spanning segment; that stretch reads LCRTLASASWLSGLTNSVA. The Extracellular portion of the chain corresponds to 158–195; that stretch reads QTALLAERPLCAPRLLDHFICELPALLKLACGGDGDTT. Residues 196 to 219 form a helical membrane-spanning segment; it reads ENQMFAARVVILLLPFAVILASYG. Over 220–236 the chain is Cytoplasmic; the sequence is AVARAVCCMRFSGGRRR. Residues 237–259 traverse the membrane as a helical segment; it reads AVGTCGSHLTAVCLFYGSAIYTY. Residues 260–272 are Extracellular-facing; the sequence is LQPAQRYNQARGK. A helical membrane pass occupies residues 273–292; that stretch reads FVSLFYTVVTPALNPLIYTL. Topologically, residues 293–315 are cytoplasmic; sequence RNKKVKGAARRLLRSLGRGQAGQ.

Belongs to the G-protein coupled receptor 1 family.

It is found in the cell membrane. Its function is as follows. Odorant receptor. The chain is Putative olfactory receptor 2I1 from Homo sapiens (Human).